A 174-amino-acid polypeptide reads, in one-letter code: Chorismate pyruvate-lyase (174 aa).

Residues M36, R78, L116, and E157 each contribute to the substrate site.

This sequence belongs to the UbiC family. As to quaternary structure, monomer.

It is found in the cytoplasm. The catalysed reaction is chorismate = 4-hydroxybenzoate + pyruvate. The protein operates within cofactor biosynthesis; ubiquinone biosynthesis. Its function is as follows. Removes the pyruvyl group from chorismate, with concomitant aromatization of the ring, to provide 4-hydroxybenzoate (4HB) for the ubiquinone pathway. The chain is Chorismate pyruvate-lyase from Serratia proteamaculans (strain 568).